A 473-amino-acid chain; its full sequence is MFS transporter prlG (473 aa).

Basic and acidic residues predominate over residues 1-12; sequence MSSTDAEAKNEE. The tract at residues 1 to 27 is disordered; that stretch reads MSSTDAEAKNEEAVDWEGPDDPENPRN. A compositionally biased stretch (acidic residues) spans 13-22; that stretch reads AVDWEGPDDP. 11 helical membrane passes run 37-57, 71-91, 101-121, 125-145, 163-183, 191-211, 266-286, 305-325, 345-365, 372-392, and 409-429; these read VLLV…FAPG, IVAS…PFLL, LIIY…CALS, AMFL…MAIG, ALFG…GGFV, WTFW…LVLM, PIVF…YLLF, GLAY…FAVL, LILM…YGWS, WIVP…ILMP, and ALAA…LAGP.

Belongs to the major facilitator superfamily.

The protein localises to the cell membrane. Its function is as follows. Efflux pump that might be required for efficient secretion of pyrrolocin or other secondary metabolies produced by the pyrrolocin gene cluster. The sequence is that of MFS transporter prlG from Fungal sp. (strain NRRL 50135).